Here is a 159-residue protein sequence, read N- to C-terminus: MSELETGARKAQGKGTPPFAYKALYRASPVDRIGVIKKGVAASDLKRFIAALHVDQKVMFDALNLKTATVNKKAANNQPLSTEDSERVLGLAKLVGQLEDMVEESGETDGFDAPEWLSSWLRQPLPALGGVNPIDLLDTMEGQAVVSRALAQIQSGAFA.

The interval 99–159 is sufficient to neutralize toxin; sequence EDMVEESGET…LAQIQSGAFA (61 aa).

Belongs to the MbcA/ParS/Xre antitoxin family. In terms of assembly, forms heterotetrameric ParS(2)-ParT(2) complexes. The 2 antitoxin fragments do not make contact in the crystal structure.

Its function is as follows. Antitoxin component of a type II toxin-antitoxin (TA) system. Neutralizes the bacteriostatic effect of cognate toxin ParT by inserting into its active site. The chain is Prs ADP-ribosylating antitoxin from Sphingobium sp. (strain YBL2).